We begin with the raw amino-acid sequence, 782 residues long: Translation initiation factor IF-2 (782 aa).

Basic and acidic residues predominate over residues 1–14 (MSKNIDDKNEDGKK). Disordered regions lie at residues 1-106 (MSKN…KKTY) and 132-174 (SIVS…AETE). Positions 15 to 25 (IKIIKLRKKVV) are enriched in basic residues. Over residues 31-43 (NDLSGKNNPSGST) the composition is skewed to polar residues. The span at 44 to 61 (DLHKHNNKVEYSHSRDGR) shows a compositional bias: basic and acidic residues. Composition is skewed to polar residues over residues 86-106 (GYSQ…KKTY) and 133-142 (IVSSASSTDS). A compositionally biased stretch (basic and acidic residues) spans 143 to 159 (ENSKELNRKLGEKKKQQ). The tr-type G domain maps to 280–453 (EKPPVITIMG…DMMLLKANPS (174 aa)). Residues 289 to 296 (GHVDHGKT) are G1. 289–296 (GHVDHGKT) contributes to the GTP binding site. The interval 314 to 318 (GITQH) is G2. The G3 stretch occupies residues 335–338 (DTPG). GTP contacts are provided by residues 335–339 (DTPGH) and 389–392 (NKID). The segment at 389-392 (NKID) is G4. The G5 stretch occupies residues 425-427 (SAL).

This sequence belongs to the TRAFAC class translation factor GTPase superfamily. Classic translation factor GTPase family. IF-2 subfamily.

The protein resides in the cytoplasm. Its function is as follows. One of the essential components for the initiation of protein synthesis. Protects formylmethionyl-tRNA from spontaneous hydrolysis and promotes its binding to the 30S ribosomal subunits. Also involved in the hydrolysis of GTP during the formation of the 70S ribosomal complex. This chain is Translation initiation factor IF-2, found in Borreliella afzelii (strain PKo) (Borrelia afzelii).